The primary structure comprises 102 residues: Small ribosomal subunit protein uS14 (102 aa).

This sequence belongs to the universal ribosomal protein uS14 family. As to quaternary structure, part of the 30S ribosomal subunit. Contacts proteins S3 and S10.

Binds 16S rRNA, required for the assembly of 30S particles and may also be responsible for determining the conformation of the 16S rRNA at the A site. This chain is Small ribosomal subunit protein uS14, found in Wolbachia pipientis wMel.